A 59-amino-acid polypeptide reads, in one-letter code: Large ribosomal subunit protein bL32 (59 aa).

The interval 1–59 (MAVQQNKKSPSKRGMHRSHDFLTNPPLAVEPTSGEIHLRHHVSPNGYYRGRKVLPAKGE) is disordered. The span at 49-59 (RGRKVLPAKGE) shows a compositional bias: basic residues.

Belongs to the bacterial ribosomal protein bL32 family.

The chain is Large ribosomal subunit protein bL32 from Methylobacillus flagellatus (strain ATCC 51484 / DSM 6875 / VKM B-1610 / KT).